The following is a 293-amino-acid chain: Ribosomal protein L11 methyltransferase (293 aa).

Residues Thr145, Gly166, Asp188, and Asn230 each contribute to the S-adenosyl-L-methionine site.

The protein belongs to the methyltransferase superfamily. PrmA family.

It localises to the cytoplasm. The catalysed reaction is L-lysyl-[protein] + 3 S-adenosyl-L-methionine = N(6),N(6),N(6)-trimethyl-L-lysyl-[protein] + 3 S-adenosyl-L-homocysteine + 3 H(+). In terms of biological role, methylates ribosomal protein L11. In Salmonella arizonae (strain ATCC BAA-731 / CDC346-86 / RSK2980), this protein is Ribosomal protein L11 methyltransferase.